The primary structure comprises 806 residues: Leucine--tRNA ligase (806 aa).

A 'HIGH' region motif is present at residues 40–51; the sequence is PYPSGAGLHVGH. A 'KMSKS' region motif is present at residues 576–580; the sequence is KMSKS. K579 serves as a coordination point for ATP.

This sequence belongs to the class-I aminoacyl-tRNA synthetase family.

It is found in the cytoplasm. The catalysed reaction is tRNA(Leu) + L-leucine + ATP = L-leucyl-tRNA(Leu) + AMP + diphosphate. The polypeptide is Leucine--tRNA ligase (Halalkalibacterium halodurans (strain ATCC BAA-125 / DSM 18197 / FERM 7344 / JCM 9153 / C-125) (Bacillus halodurans)).